Reading from the N-terminus, the 344-residue chain is Fe-S cluster assembly protein DRE2 (344 aa).

The N-terminal SAM-like domain stretch occupies residues 1 to 160 (MTSNILLLLH…KKLNNDNAST (160 aa)). The segment at 154–179 (NNDNASTPGLTDSSAGTSEDETATVS) is disordered. The segment covering 155-170 (NDNASTPGLTDSSAGT) has biased composition (polar residues). The tract at residues 161–223 (PGLTDSSAGT…NDLIAESNKY (63 aa)) is linker. [2Fe-2S] cluster-binding residues include C231, C243, C246, and C248. Residues 231–248 (CELPNGKKRKKACKDCTC) form a fe-S binding site A region. Residues C313, C316, C324, and C327 each contribute to the [4Fe-4S] cluster site. Short sequence motifs (cx2C motif) lie at residues 313–316 (CGSC) and 324–327 (CDGC). The segment at 313–327 (CGSCSLGDAFRCDGC) is fe-S binding site B.

It belongs to the anamorsin family. Monomer. Interacts with TAH18. Interacts with MIA40. [2Fe-2S] cluster is required as a cofactor. The cofactor is [4Fe-4S] cluster.

It localises to the cytoplasm. Its subcellular location is the mitochondrion intermembrane space. Its function is as follows. Component of the cytosolic iron-sulfur (Fe-S) protein assembly (CIA) machinery required for the maturation of extramitochondrial Fe-S proteins. Part of an electron transfer chain functioning in an early step of cytosolic Fe-S biogenesis, facilitating the de novo assembly of a [4Fe-4S] cluster on the scaffold complex CFD1-NBP35. Electrons are transferred to DRE2 from NADPH via the FAD- and FMN-containing protein TAH18. TAH18-DRE2 are also required for the assembly of the diferric tyrosyl radical cofactor of ribonucleotide reductase (RNR), probably by providing electrons for reduction during radical cofactor maturation in the catalytic small subunit RNR2. This chain is Fe-S cluster assembly protein DRE2, found in Candida tropicalis (strain ATCC MYA-3404 / T1) (Yeast).